The primary structure comprises 857 residues: Envelope glycoprotein B (857 aa).

The first 21 residues, 1-21 (MTRRRVLSVVVLLAALACRLG), serve as a signal peptide directing secretion. Topologically, residues 22-732 (AQTPEQPAPP…SGFISFFKNP (711 aa)) are virion surface. 5 disulfide bridges follow: C51/C528, C68/C484, C141/C206, C295/C342, and C551/C588. N76 is a glycosylation site (N-linked (GlcNAc...) asparagine; by host). Residues 108–114 (IYNGWYA) are involved in fusion and/or binding to host membrane. N-linked (GlcNAc...) asparagine; by host glycosylation is present at N163. The tract at residues 192–200 (GWLIWTYRT) is involved in fusion and/or binding to host membrane. Residues N290, N329, N348, and N395 are each glycosylated (N-linked (GlcNAc...) asparagine; by host). A disordered region spans residues 398-452 (ELTTPTSSPPSSPSPPAPPAARGSTSAAVLRRRRRDAGNATTPVPPAAPGKSLGT). Pro residues predominate over residues 404 to 416 (SSPPSSPSPPAPP). N-linked (GlcNAc...) asparagine; by host glycosylation is found at N436, N563, and N629. Hydrophobic membrane proximal region stretches follow at residues 678–730 (LDNA…SFFK) and 709–729 (NLVS…ISFF). The chain crosses the membrane as a helical span at residues 733–753 (FGGMLILVLVAGVVILVISLT). Residues 754 to 857 (RRTRQMSQQP…ALLGEAETEF (104 aa)) lie on the Intravirion side of the membrane. The interval 832-857 (FPGLRRRRYHDPETAAALLGEAETEF) is disordered. Residues 845-857 (TAAALLGEAETEF) are compositionally biased toward low complexity.

This sequence belongs to the herpesviridae glycoprotein B family. Homotrimer; disulfide-linked. Binds to heparan sulfate proteoglycans. Interacts with gH/gL heterodimer. A proteolytic cleavage by host furin generates two subunits that remain linked by disulfide bonds.

Its subcellular location is the virion membrane. It is found in the host cell membrane. The protein localises to the host endosome membrane. The protein resides in the host Golgi apparatus membrane. Its function is as follows. Envelope glycoprotein that forms spikes at the surface of virion envelope. Essential for the initial attachment to heparan sulfate moieties of the host cell surface proteoglycans. Involved in fusion of viral and cellular membranes leading to virus entry into the host cell. Following initial binding to its host receptors, membrane fusion is mediated by the fusion machinery composed at least of gB and the heterodimer gH/gL. May be involved in the fusion between the virion envelope and the outer nuclear membrane during virion egress. This is Envelope glycoprotein B from Epstein-Barr virus (strain GD1) (HHV-4).